The following is a 98-amino-acid chain: UPF0235 protein Mmc1_3654 (98 aa).

Belongs to the UPF0235 family.

The sequence is that of UPF0235 protein Mmc1_3654 from Magnetococcus marinus (strain ATCC BAA-1437 / JCM 17883 / MC-1).